A 366-amino-acid polypeptide reads, in one-letter code: Galactoside alpha-(1,2)-fucosyltransferase 1 (366 aa).

Topologically, residues 1 to 8 (MWPLSHRH) are cytoplasmic. The chain crosses the membrane as a helical; Signal-anchor for type II membrane protein span at residues 9–25 (LCLAFLLVCVLSAISFF). The Lumenal portion of the chain corresponds to 26–366 (LHIHQDSFPH…LSPLWTLAEP (341 aa)). Residues N66, N302, and N328 are each glycosylated (N-linked (GlcNAc...) asparagine).

Belongs to the glycosyltransferase 11 family.

Its subcellular location is the golgi apparatus. It localises to the golgi stack membrane. The enzyme catalyses a beta-D-galactosyl-(1-&gt;4)-N-acetyl-beta-D-glucosaminyl derivative + GDP-beta-L-fucose = an alpha-L-Fuc-(1-&gt;2)-beta-D-Gal-(1-&gt;4)-beta-D-GlcNAc derivative + GDP + H(+). It catalyses the reaction a ganglioside GA1 + GDP-beta-L-fucose = a ganglioside Fuc-GA1 + GDP + H(+). The catalysed reaction is a beta-D-Gal-(1-&gt;3)-beta-D-GlcNAc-(1-&gt;3)-beta-D-Gal-(1-&gt;4)-beta-D-Glc-(1&lt;-&gt;1')-Cer(d18:1(4E)) + GDP-beta-L-fucose = alpha-L-fucosyl-(1-&gt;2)- beta-D-galactosyl-(1-&gt;3)-N-acetyl-beta-D-glucosaminyl-(1-&gt;3)-beta-D-galactosyl-(1-&gt;4)-beta-D-glucosyl-(1&lt;-&gt;1')-N-acylsphing-4-enine + GDP + H(+). It carries out the reaction a neolactoside nLc4Cer(d18:1(4E)) + GDP-beta-L-fucose = a neolactoside IV(2)-alpha-Fuc-nLc4Cer(d18:1(4E)) + GDP + H(+). The enzyme catalyses a ganglioside GM1 + GDP-beta-L-fucose = a ganglioside Fuc-GM1 + GDP + H(+). It catalyses the reaction beta-D-galactosyl-(1-&gt;3)-N-acetyl-D-galactosamine + GDP-beta-L-fucose = alpha-L-fucosyl-(1-&gt;2)-beta-D-galactosyl-(1-&gt;3)-N-acetyl-D-galactosamine + GDP + H(+). It participates in protein modification; protein glycosylation. Functionally, catalyzes the transfer of L-fucose, from a guanosine diphosphate-beta-L-fucose, to the terminal galactose residue of glycoconjugates through an alpha(1,2) linkage leading to H antigen synthesis that is an intermediate substrate in the synthesis of ABO blood group antigens. H antigen is essential for maturation of the glomerular layer of the main olfactory bulb, in cell migration and early cell-cell contacts during tumor associated angiogenesis. Preferentially fucosylates soluble lactose and to a lesser extent fucosylates glycolipids gangliosides GA1 and GM1a. The polypeptide is Galactoside alpha-(1,2)-fucosyltransferase 1 (Lagothrix lagotricha (Brown woolly monkey)).